A 78-amino-acid polypeptide reads, in one-letter code: Small, acid-soluble spore protein Tlp (78 aa).

A disordered region spans residues 32 to 78 (SEEQLSFASEAEQEQIREKNERRNESIEAMRNEIHDEAEARKNGYHQ). Positions 45 to 78 (EQIREKNERRNESIEAMRNEIHDEAEARKNGYHQ) are enriched in basic and acidic residues.

This sequence belongs to the Tlp family.

It is found in the spore core. This Bacillus licheniformis (strain ATCC 14580 / DSM 13 / JCM 2505 / CCUG 7422 / NBRC 12200 / NCIMB 9375 / NCTC 10341 / NRRL NRS-1264 / Gibson 46) protein is Small, acid-soluble spore protein Tlp.